Consider the following 105-residue polypeptide: Thioredoxin (105 aa).

The Thioredoxin domain maps to 1-105; it reads VQVISSYDQF…LQAAITQHSA (105 aa). Active-site nucleophile residues include C29 and C32. C29 and C32 are disulfide-bonded.

This sequence belongs to the thioredoxin family. As to quaternary structure, monomer.

Its function is as follows. Participates in various redox reactions through the reversible oxidation of its active center dithiol to a disulfide and catalyzes dithiol-disulfide exchange reactions. This Malassezia sympodialis (Atopic eczema-associated yeast) protein is Thioredoxin.